A 523-amino-acid polypeptide reads, in one-letter code: Frizzled-2 (523 aa).

Positions P1–Q120 constitute an FZ domain. The Extracellular segment spans residues P1–W205. Disulfide bonds link C6-C67, C14-C60, C51-C88, C77-C117, and C81-C105. N-linked (GlcNAc...) asparagine glycosylation is present at N20. Residue N121 is glycosylated (N-linked (GlcNAc...) asparagine). A helical membrane pass occupies residues I206 to V226. Topologically, residues D227 to P237 are cytoplasmic. The helical transmembrane segment at I238–L258 threads the bilayer. The Extracellular segment spans residues E259–C285. A helical membrane pass occupies residues T286–L306. Topologically, residues S307 to Q328 are cytoplasmic. Residues Y329–G349 traverse the membrane as a helical segment. Residues Q350–G372 lie on the Extracellular side of the membrane. Residues F373–F393 traverse the membrane as a helical segment. The Cytoplasmic portion of the chain corresponds to V394 to R419. Residues I420–Y440 form a helical membrane-spanning segment. Topologically, residues E441–T477 are extracellular. Residues V478–F498 traverse the membrane as a helical segment. The Cytoplasmic portion of the chain corresponds to S499–V523. Residues K501–W506 carry the Lys-Thr-X-X-X-Trp motif, mediates interaction with the PDZ domain of Dvl family members motif. The PDZ-binding motif lies at T521–V523.

The protein belongs to the G-protein coupled receptor Fz/Smo family. Expressed in the developing head and limbs. Expressed broadly in cranial ectoderm. Also expressed in the developing somites (dermomyotome) and in other cranial placodes, including the olfactory, lens, and otic placodes (rostral rim of the vesicle).

It localises to the membrane. The protein localises to the cell membrane. Its function is as follows. Receptor for Wnt proteins. Most of frizzled receptors are coupled to the beta-catenin canonical signaling pathway, which leads to the activation of disheveled proteins, inhibition of GSK-3 kinase, nuclear accumulation of beta-catenin and activation of Wnt target genes. A second signaling pathway involving PKC and calcium fluxes has been seen for some family members, but it is not yet clear if it represents a distinct pathway or if it can be integrated in the canonical pathway, as PKC seems to be required for Wnt-mediated inactivation of GSK-3 kinase. Both pathways seem to involve interactions with G-proteins. May be involved in transduction and intercellular transmission of polarity information during tissue morphogenesis and/or in differentiated tissues. This Gallus gallus (Chicken) protein is Frizzled-2 (FZD2).